Here is a 118-residue protein sequence, read N- to C-terminus: Protein yippee-like 1 (118 aa).

The Yippee domain maps to 19–116 (RTYSCIHCRA…IELAHMIKDN (98 aa)). Residues Cys-23, Cys-26, Cys-79, and Cys-82 each contribute to the Zn(2+) site. Residues 99-104 (KYKEGK) carry the Nuclear localization signal motif.

The protein belongs to the yippee family.

Its subcellular location is the nucleus. Its function is as follows. May play a role in epithelioid conversion of fibroblasts. In Mus musculus (Mouse), this protein is Protein yippee-like 1 (Ypel1).